Reading from the N-terminus, the 121-residue chain is Large ribosomal subunit protein uL18 (121 aa).

It belongs to the universal ribosomal protein uL18 family. In terms of assembly, part of the 50S ribosomal subunit; part of the 5S rRNA/L5/L18/L25 subcomplex. Contacts the 5S and 23S rRNAs.

Functionally, this is one of the proteins that bind and probably mediate the attachment of the 5S RNA into the large ribosomal subunit, where it forms part of the central protuberance. This chain is Large ribosomal subunit protein uL18, found in Thermoanaerobacter pseudethanolicus (strain ATCC 33223 / 39E) (Clostridium thermohydrosulfuricum).